The following is a 341-amino-acid chain: Glyceraldehyde-3-phosphate dehydrogenase, cytosolic (341 aa).

NAD(+)-binding positions include 15 to 16, Asp-37, and Arg-84; that span reads RI. D-glyceraldehyde 3-phosphate-binding positions include 155-157, Thr-186, 215-216, and Arg-238; these read SCT and TG. Cys-156 acts as the Nucleophile in catalysis. Residue Asn-320 coordinates NAD(+).

The protein belongs to the glyceraldehyde-3-phosphate dehydrogenase family. In terms of assembly, homotetramer.

The protein localises to the cytoplasm. It catalyses the reaction D-glyceraldehyde 3-phosphate + phosphate + NAD(+) = (2R)-3-phospho-glyceroyl phosphate + NADH + H(+). The protein operates within carbohydrate degradation; glycolysis; pyruvate from D-glyceraldehyde 3-phosphate: step 1/5. Key enzyme in glycolysis that catalyzes the first step of the pathway by converting D-glyceraldehyde 3-phosphate (G3P) into 3-phospho-D-glyceroyl phosphate. Essential for the maintenance of cellular ATP levels and carbohydrate metabolism. This Magnolia liliiflora (Mulan magnolia) protein is Glyceraldehyde-3-phosphate dehydrogenase, cytosolic (GAPC).